The sequence spans 206 residues: Ribosomal RNA small subunit methyltransferase G (206 aa).

S-adenosyl-L-methionine contacts are provided by residues Gly-73, Leu-78, 124 to 125 (VE), and Arg-139.

Belongs to the methyltransferase superfamily. RNA methyltransferase RsmG family.

It localises to the cytoplasm. It catalyses the reaction guanosine(527) in 16S rRNA + S-adenosyl-L-methionine = N(7)-methylguanosine(527) in 16S rRNA + S-adenosyl-L-homocysteine. Functionally, specifically methylates the N7 position of guanine in position 527 of 16S rRNA. In Yersinia enterocolitica serotype O:8 / biotype 1B (strain NCTC 13174 / 8081), this protein is Ribosomal RNA small subunit methyltransferase G.